The primary structure comprises 359 residues: MKKVLALALIAPLLISCSGKKPDSNGEEYIKDTNGFDILMGQFAHNIENIWGINEVLIAGPKDYVKYSDRYLTRSHINFETGQITIETIATLNPAETLRQAIVTTLLMGDDPSSIDLYSDANDIKPSREPFLYGQVLDNTGQPIRWSGRANSFADYLLQNKLMKRTSGLHVIYSVTIQLVPNHLDKRAHKYLDMVRRASERYGVDESLILAIMQTESSFNPYAVSRSDALGLMQVMQHTAGKDVFVSKGKWGTPSRSYLFDPEKNIDTGTAYLAILQNTYLGGIQNTTSRRYAVITAYNGGAGSVLRIFSSDKGQAVNIINQMSPGDVYEALTQRHPSAESRRYLYKVNNTQKNYRRIR.

Residues 1-16 form the signal peptide; it reads MKKVLALALIAPLLIS. Cys17 is lipidated: N-palmitoyl cysteine. A lipid anchor (S-diacylglycerol cysteine) is attached at Cys17.

The protein belongs to the transglycosylase Slt family.

The protein localises to the cell outer membrane. It catalyses the reaction Exolytic cleavage of the (1-&gt;4)-beta-glycosidic linkage between N-acetylmuramic acid (MurNAc) and N-acetylglucosamine (GlcNAc) residues in peptidoglycan, from either the reducing or the non-reducing ends of the peptidoglycan chains, with concomitant formation of a 1,6-anhydrobond in the MurNAc residue.. Its function is as follows. Murein-degrading enzyme. May play a role in recycling of muropeptides during cell elongation and/or cell division. The sequence is that of Membrane-bound lytic murein transglycosylase C from Edwardsiella ictaluri (strain 93-146).